We begin with the raw amino-acid sequence, 1222 residues long: Kinesin-related protein 9 (1222 aa).

Residues 1–25 (MDNNNNNFSTPKQPTINSTTGGQLR) are compositionally biased toward polar residues. Disordered stretches follow at residues 1–55 (MDNN…ITNS), 75–165 (MDSL…STNI), and 188–343 (SSNT…TQPL). Residues 26–55 (SRSNSSPSTSSISTPRNGSTTATTSSITNS) show a composition bias toward low complexity. A compositionally biased stretch (polar residues) spans 75 to 85 (MDSLSTPMSQS). Low complexity-rich tracts occupy residues 122 to 165 (SFIS…STNI), 194 to 209 (SSLPSSTNNGNNPLSN), 216 to 238 (NHHLVNSNSSTSTPSPTMFISTT), and 254 to 325 (NLTT…RTPI). Positions 326 to 343 (QNFNSVGGVNITSKTQPL) are enriched in polar residues. The 370-residue stretch at 350–719 (SIQAVCRFRP…LNFGQRAQSV (370 aa)) folds into the Kinesin motor domain. Position 438–445 (438–445 (GQTGAGKT)) interacts with ATP. A coiled-coil region spans residues 724–1026 (LQNVEESHSE…DTLTNKLEIQ (303 aa)). The tract at residues 1144 to 1174 (NINNNNNIKNNNNNNKLKSKKVGSSSSSSSN) is disordered. Residues 1183-1203 (ILFFLIILVILFFLMVAVGLT) form a helical membrane-spanning segment.

This sequence belongs to the TRAFAC class myosin-kinesin ATPase superfamily. Kinesin family.

The protein resides in the membrane. Its subcellular location is the cytoplasm. It localises to the cytoskeleton. In terms of biological role, microtubule-associated force-producing protein that plays a role in organelle transport. Its motor activity is directed toward the microtubule's plus end. This is Kinesin-related protein 9 (kif9) from Dictyostelium discoideum (Social amoeba).